We begin with the raw amino-acid sequence, 274 residues long: GCN5-related N-acetyltransferase 7, chloroplastic (274 aa).

A chloroplast-targeting transit peptide spans Met1–Ser65. In terms of domain architecture, N-acetyltransferase spans Leu75–Pro267. Residues Val189–Val191, Arg197–Tyr202, Asn228–Ala230, and Tyr235 each bind acetyl-CoA. Tyr235 (proton donor) is an active-site residue.

The protein belongs to the acetyltransferase family. GNAT subfamily. Oligomer. In terms of processing, autoacetylated. Expressed in green tissues.

The protein localises to the plastid. The protein resides in the chloroplast. The enzyme catalyses an N-terminal L-alpha-aminoacyl-[protein] + acetyl-CoA = N-terminal N(alpha)-acetyl-L-alpha-aminoacyl-[protein] + CoA + H(+). The catalysed reaction is L-lysyl-[protein] + acetyl-CoA = N(6)-acetyl-L-lysyl-[protein] + CoA + H(+). It carries out the reaction N-terminal L-alanyl-[protein] + acetyl-CoA = N-terminal N(alpha)-acetyl-L-alanyl-[protein] + CoA + H(+). It catalyses the reaction N-terminal L-seryl-[protein] + acetyl-CoA = N-terminal N(alpha)-acetyl-L-seryl-[protein] + CoA + H(+). The enzyme catalyses N-terminal L-threonyl-[protein] + acetyl-CoA = N-terminal N(alpha)-acetyl-L-threonyl-[protein] + CoA + H(+). The catalysed reaction is N-terminal L-methionyl-[protein] + acetyl-CoA = N-terminal N(alpha)-acetyl-L-methionyl-[protein] + CoA + H(+). It carries out the reaction N-terminal L-prolyl-[protein] + acetyl-CoA = N-terminal N(alpha)-acetyl-L-prolyl-[protein] + CoA + H(+). It catalyses the reaction N-terminal L-valyl-[protein] + acetyl-CoA = N-terminal N(alpha)-acetyl-L-valyl-[protein] + CoA + H(+). Functionally, protein acetyltransferase with dual specificity triggering both N-alpha-acetylation (NTA), with a large spectrum of modified N-termini, including methionine, alanine, serine, threonine and to a lower extent valine and proline as substrates, and epsilon-lysine acetylation (KA). This chain is GCN5-related N-acetyltransferase 7, chloroplastic, found in Arabidopsis thaliana (Mouse-ear cress).